A 1856-amino-acid chain; its full sequence is Autophagy-related protein 2 (1856 aa).

Disordered regions lie at residues 123-167, 229-283, 309-328, 395-428, 1157-1177, 1614-1647, and 1719-1741; these read NTND…TGNK, LRTL…GNES, KSAA…DKED, TKSR…DASH, LNGT…SSLM, MLGG…VEVA, and KLQP…EDED. Residues 137–147 show a composition bias toward acidic residues; that stretch reads ASEDDDEDDID. Polar residues predominate over residues 250 to 262; that stretch reads KKQQGSDNDSPTD. Over residues 270-280 the composition is skewed to acidic residues; sequence NDNDDDDDDYG. Positions 412–424 are enriched in acidic residues; that stretch reads DNDEIPEDQSESD. A compositionally biased stretch (low complexity) spans 1157 to 1170; it reads LNGTENGSTSESSS. Polar residues predominate over residues 1621 to 1639; the sequence is SVRSPNLGGSDNRRNSNAS. Acidic residues predominate over residues 1732-1741; that stretch reads TEEEEDEDED.

The protein belongs to the ATG2 family.

Its subcellular location is the preautophagosomal structure membrane. The protein localises to the endoplasmic reticulum membrane. It carries out the reaction a 1,2-diacyl-sn-glycero-3-phosphocholine(in) = a 1,2-diacyl-sn-glycero-3-phosphocholine(out). The catalysed reaction is a 1,2-diacyl-sn-glycero-3-phospho-L-serine(in) = a 1,2-diacyl-sn-glycero-3-phospho-L-serine(out). It catalyses the reaction a 1,2-diacyl-sn-glycero-3-phosphoethanolamine(in) = a 1,2-diacyl-sn-glycero-3-phosphoethanolamine(out). Lipid transfer protein required for autophagosome completion and peroxisome degradation. Tethers the edge of the isolation membrane (IM) to the endoplasmic reticulum (ER) and mediates direct lipid transfer from ER to IM for IM expansion. ATG2/SPO72 binds to the ER exit site (ERES), which is the membrane source for autophagosome formation, using basic residues in its N-terminal region (NR) and to the expanding edge of the IM through its C-terminal region. The latter binding is assisted by an ATG18-PtdIns3P interaction. ATG2/SPO72 then extracts phospholipids from the membrane source using its NR and transfers them to ATG9 to the IM through its predicted beta-sheet-rich structure for membrane expansion. This is Autophagy-related protein 2 (SPO72) from Candida albicans (strain SC5314 / ATCC MYA-2876) (Yeast).